The following is a 219-amino-acid chain: Thiamine-phosphate synthase (219 aa).

4-amino-2-methyl-5-(diphosphooxymethyl)pyrimidine-binding positions include 44–48 and Asn79; that span reads QFREK. Residues Asp80 and Asp99 each coordinate Mg(2+). Ser117 contacts 4-amino-2-methyl-5-(diphosphooxymethyl)pyrimidine. Position 143–145 (143–145) interacts with 2-[(2R,5Z)-2-carboxy-4-methylthiazol-5(2H)-ylidene]ethyl phosphate; sequence TST. Lys146 lines the 4-amino-2-methyl-5-(diphosphooxymethyl)pyrimidine pocket. Residues Gly175 and 195-196 each bind 2-[(2R,5Z)-2-carboxy-4-methylthiazol-5(2H)-ylidene]ethyl phosphate; that span reads IS.

The protein belongs to the thiamine-phosphate synthase family. It depends on Mg(2+) as a cofactor.

It catalyses the reaction 2-[(2R,5Z)-2-carboxy-4-methylthiazol-5(2H)-ylidene]ethyl phosphate + 4-amino-2-methyl-5-(diphosphooxymethyl)pyrimidine + 2 H(+) = thiamine phosphate + CO2 + diphosphate. The enzyme catalyses 2-(2-carboxy-4-methylthiazol-5-yl)ethyl phosphate + 4-amino-2-methyl-5-(diphosphooxymethyl)pyrimidine + 2 H(+) = thiamine phosphate + CO2 + diphosphate. It carries out the reaction 4-methyl-5-(2-phosphooxyethyl)-thiazole + 4-amino-2-methyl-5-(diphosphooxymethyl)pyrimidine + H(+) = thiamine phosphate + diphosphate. Its pathway is cofactor biosynthesis; thiamine diphosphate biosynthesis; thiamine phosphate from 4-amino-2-methyl-5-diphosphomethylpyrimidine and 4-methyl-5-(2-phosphoethyl)-thiazole: step 1/1. Functionally, condenses 4-methyl-5-(beta-hydroxyethyl)thiazole monophosphate (THZ-P) and 2-methyl-4-amino-5-hydroxymethyl pyrimidine pyrophosphate (HMP-PP) to form thiamine monophosphate (TMP). This Bacillus cereus (strain ZK / E33L) protein is Thiamine-phosphate synthase.